The sequence spans 271 residues: Elongation factor Ts (271 aa).

The segment at 76 to 79 is involved in Mg(2+) ion dislocation from EF-Tu; the sequence is TDFV.

It belongs to the EF-Ts family.

It is found in the cytoplasm. Its function is as follows. Associates with the EF-Tu.GDP complex and induces the exchange of GDP to GTP. It remains bound to the aminoacyl-tRNA.EF-Tu.GTP complex up to the GTP hydrolysis stage on the ribosome. The sequence is that of Elongation factor Ts from Mycobacterium tuberculosis (strain ATCC 25177 / H37Ra).